Reading from the N-terminus, the 300-residue chain is Glutamyl-Q tRNA(Asp) synthetase (300 aa).

L-glutamate is bound by residues 8 to 12 and Glu-44; that span reads RFAPS. The 'HIGH' region motif lies at 11–21; it reads PSPTGALHAGS. The Zn(2+) site is built by Cys-100, Cys-102, Tyr-126, and Cys-130. Residues Tyr-190 and Arg-208 each coordinate L-glutamate. The 'KMSKS' region signature appears at 246 to 250; sequence KLSKQ. Position 249 (Lys-249) interacts with ATP.

It belongs to the class-I aminoacyl-tRNA synthetase family. GluQ subfamily. It depends on Zn(2+) as a cofactor.

In terms of biological role, catalyzes the tRNA-independent activation of glutamate in presence of ATP and the subsequent transfer of glutamate onto a tRNA(Asp). Glutamate is transferred on the 2-amino-5-(4,5-dihydroxy-2-cyclopenten-1-yl) moiety of the queuosine in the wobble position of the QUC anticodon. The sequence is that of Glutamyl-Q tRNA(Asp) synthetase from Leptothrix cholodnii (strain ATCC 51168 / LMG 8142 / SP-6) (Leptothrix discophora (strain SP-6)).